A 311-amino-acid chain; its full sequence is MEIPEEVKKRLTIPFEENFFAGHTACQGCGASLGLRYVLKAYGRKTIVVIPACCSTIIAGPWPYSALNANLFHTAFATTGAVISGIEAGLKALGYKVKGEDGIMVVGWAGDGGTADIGLQALSGFIERGHDAVYIMYDNEAYMNTGIQRSSSTPYGAWTTNTPGGKRHLLEKRHKKKVIDIVIAHRIPYAATASVAYPEDFIRKLKKAQKIPGPSFIQLFAPCPTGWRAPTDKSIEIARLAVQTAYFPLFEYENGKYKINMPNPKKEPKPIEEFLKLQGRFKYMTKEDVEALQKWVLEEWERLKKLAEVFG.

In terms of assembly, heterotetramer of one alpha, one beta, one delta and one gamma chain.

It catalyses the reaction 3-methyl-2-oxobutanoate + 2 oxidized [2Fe-2S]-[ferredoxin] + CoA = 2-methylpropanoyl-CoA + 2 reduced [2Fe-2S]-[ferredoxin] + CO2 + H(+). The sequence is that of Ketoisovalerate oxidoreductase subunit VorB (vorB) from Pyrococcus horikoshii (strain ATCC 700860 / DSM 12428 / JCM 9974 / NBRC 100139 / OT-3).